Consider the following 768-residue polypeptide: Vacuolar basic amino acid transporter 4 (768 aa).

At 1–252 the chain is on the cytoplasmic side; sequence MGKKDRQRKK…HDLTRRRIFS (252 aa). Residues 9 to 40 adopt a coiled-coil conformation; it reads KKLREFAKLKNRQRNLRKSVQTLKNEVQREAK. A disordered region spans residues 34–172; sequence EVQREAKVPR…ELPVSSSNSF (139 aa). Residues Ser-62, Ser-99, and Ser-106 each carry the phosphoserine modification. Basic and acidic residues predominate over residues 110-121; it reads KPADKANEDDLK. Residues 132–159 are compositionally biased toward polar residues; the sequence is SALQSSITDFSDRSVSPLQSITSCNTPM. Phosphoserine occurs at positions 160 and 192. Residues 253–273 traverse the membrane as a helical segment; sequence SCMCTYLFFIAMDSSIILVIA. Residues 274–282 are Vacuolar-facing; sequence SKIASEFHE. Residues 283-305 form a helical membrane-spanning segment; the sequence is LWRLSLVISAYLLSNAIGQLVFL. The Cytoplasmic portion of the chain corresponds to 306-311; sequence KLSLIS. The helical transmembrane segment at 312–331 threads the bilayer; sequence SVKLLLCIAQFSFILGGYLS. Residues 332-334 lie on the Vacuolar side of the membrane; sequence WSS. A helical membrane pass occupies residues 335–357; sequence AHFWTFIFARCVTGFGGGSLIAL. Residues 358 to 375 lie on the Cytoplasmic side of the membrane; that stretch reads KSTIMNRFSQKNDSRYSL. A helical membrane pass occupies residues 376–396; sequence SASMITFAMGVVIGPFMMNLF. The Vacuolar portion of the chain corresponds to 397–406; that stretch reads DSSHGSGWRN. The chain crosses the membrane as a helical span at residues 407–427; sequence AFLIPVPFCLVNASIMLADMY. Residues 428–447 are Cytoplasmic-facing; it reads SVKSTLYGRPTPTLWKRFKN. The helical transmembrane segment at 448–468 threads the bilayer; the sequence is TLLSPDLYEILTLTLFLLCFV. Residues 469 to 481 are Vacuolar-facing; sequence QVTSLDLTGLKNN. N-linked (GlcNAc...) asparagine glycosylation is present at Asn-480. Residues 482-502 form a helical membrane-spanning segment; that stretch reads TMIQALLFSVIIVCGILFFLI. The Cytoplasmic portion of the chain corresponds to 503–522; it reads ETSDTYMNSVISMSLQGDKR. A helical transmembrane segment spans residues 523–543; that stretch reads LIWTMIGISFCFAALMCIIPF. Topologically, residues 544–562 are vacuolar; the sequence is GTTYFIIVLNLSTLQLAER. N-linked (GlcNAc...) asparagine glycosylation is present at Asn-553. A helical transmembrane segment spans residues 563-583; it reads LSPFFFSIVLGYFSVSYFWKS. The Cytoplasmic portion of the chain corresponds to 584 to 587; sequence KGQN. A helical transmembrane segment spans residues 588–608; that stretch reads FLLKFVLSGATLLLYVALMGV. Topologically, residues 609 to 617 are vacuolar; the sequence is SLNLPVWKQ. A helical membrane pass occupies residues 618–638; that stretch reads YICLSLPFLGSSMILTLLSNL. Topologically, residues 639-653 are cytoplasmic; that stretch reads YHEYHEQRKSPISGS. A helical transmembrane segment spans residues 654–674; sequence IVYCFGAVGGTVGISLGGYVF. At 675–734 the chain is on the vacuolar side; the sequence is HKTLIKLMHEKVMPFSKQGYLKKDLLKIIKHATESSDWVHESAPKFVFQTLIECYLQACR. A helical transmembrane segment spans residues 735 to 755; it reads NVFKLSTLFFTITVVAIFIFN. At 756-768 the chain is on the cytoplasmic side; that stretch reads RIHCRSQNCLSLS.

The protein belongs to the major facilitator superfamily.

It is found in the vacuole membrane. In terms of biological role, transporter required for vacuolar uptake of basic amino acids. The sequence is that of Vacuolar basic amino acid transporter 4 (VBA4) from Saccharomyces cerevisiae (strain ATCC 204508 / S288c) (Baker's yeast).